The primary structure comprises 687 residues: DNA ligase (687 aa).

Residues 33–37 (DAEFD), 83–84 (SL), and Glu113 each bind NAD(+). The N6-AMP-lysine intermediate role is filled by Lys115. Residues Arg136, Glu176, Lys292, and Lys316 each coordinate NAD(+). Residues Cys410, Cys413, Cys429, and Cys435 each coordinate Zn(2+). The region spanning 599 to 687 (SVPRTLAGVT…GPPAEVGEPT (89 aa)) is the BRCT domain.

This sequence belongs to the NAD-dependent DNA ligase family. LigA subfamily. Mg(2+) is required as a cofactor. Mn(2+) serves as cofactor.

The catalysed reaction is NAD(+) + (deoxyribonucleotide)n-3'-hydroxyl + 5'-phospho-(deoxyribonucleotide)m = (deoxyribonucleotide)n+m + AMP + beta-nicotinamide D-nucleotide.. Its function is as follows. DNA ligase that catalyzes the formation of phosphodiester linkages between 5'-phosphoryl and 3'-hydroxyl groups in double-stranded DNA using NAD as a coenzyme and as the energy source for the reaction. It is essential for DNA replication and repair of damaged DNA. This chain is DNA ligase, found in Mycobacterium marinum (strain ATCC BAA-535 / M).